Here is a 73-residue protein sequence, read N- to C-terminus: Large ribosomal subunit protein bL31 (73 aa).

The protein belongs to the bacterial ribosomal protein bL31 family. Type A subfamily. In terms of assembly, part of the 50S ribosomal subunit.

In terms of biological role, binds the 23S rRNA. This is Large ribosomal subunit protein bL31 from Paracoccus denitrificans (strain Pd 1222).